The sequence spans 420 residues: Structure-specific endonuclease subunit SLX1 homolog (420 aa).

The GIY-YIG domain maps to 19-106 (SSDNTYPWQN…QHPLKSRRLR (88 aa)). 2 disordered regions span residues 237–306 (SVEE…AAVN) and 311–330 (DDSA…DDVA). The span at 247–266 (PSSCSVPPSTGSSAAPTPGA) shows a compositional bias: low complexity. Positions 279–301 (VDPRLDSDDRDDNHQFESPDNHE) are enriched in basic and acidic residues. Positions 311 to 327 (DDSADDGTTDGNEDGPD) are enriched in acidic residues. The SLX1-type zinc-finger motif lies at 348–405 (CGHCHQSVYQELCIVCLNATCTYRAHLLCAAQAAVHPLGQSSPSETRLVPLRHSCPRC).

The protein belongs to the SLX1 family. In terms of assembly, forms a heterodimer with a member of the SLX4 family. A divalent metal cation serves as cofactor.

Its subcellular location is the nucleus. Its function is as follows. Catalytic subunit of a heterodimeric structure-specific endonuclease that resolves DNA secondary structures generated during DNA repair and recombination. Has endonuclease activity towards branched DNA substrates, introducing single-strand cuts in duplex DNA close to junctions with ss-DNA. The protein is Structure-specific endonuclease subunit SLX1 homolog of Monosiga brevicollis (Choanoflagellate).